Consider the following 590-residue polypeptide: Potassium-transporting ATPase potassium-binding subunit (590 aa).

4 helical membrane-spanning segments follow: residues 3-23 (AFLL…RPLG), 63-83 (HYAL…YALQ), 134-154 (GLAV…IALI), and 177-197 (LYVL…QGAI). A disordered region spans residues 217 to 244 (PKTDAQGNPIKDAQGNPVTEKATTQKQT). The next 8 membrane-spanning stretches (helical) occupy residues 284–304 (FVQM…FGAM), 312–332 (WAVL…EMWA), 359–379 (FGVV…CGAV), 388–408 (ALGG…FGGV), 411–431 (GLYG…LMIG), 450–470 (SIAI…AVLA), 515–535 (VALG…VLAM), and 558–578 (LFVV…YIPA).

This sequence belongs to the KdpA family. The system is composed of three essential subunits: KdpA, KdpB and KdpC.

It is found in the cell inner membrane. Functionally, part of the high-affinity ATP-driven potassium transport (or Kdp) system, which catalyzes the hydrolysis of ATP coupled with the electrogenic transport of potassium into the cytoplasm. This subunit binds the periplasmic potassium ions and delivers the ions to the membrane domain of KdpB through an intramembrane tunnel. This chain is Potassium-transporting ATPase potassium-binding subunit, found in Ralstonia nicotianae (strain ATCC BAA-1114 / GMI1000) (Ralstonia solanacearum).